We begin with the raw amino-acid sequence, 448 residues long: Probable glycine dehydrogenase (decarboxylating) subunit 1 (448 aa).

Belongs to the GcvP family. N-terminal subunit subfamily. The glycine cleavage system is composed of four proteins: P, T, L and H. In this organism, the P 'protein' is a heterodimer of two subunits.

The catalysed reaction is N(6)-[(R)-lipoyl]-L-lysyl-[glycine-cleavage complex H protein] + glycine + H(+) = N(6)-[(R)-S(8)-aminomethyldihydrolipoyl]-L-lysyl-[glycine-cleavage complex H protein] + CO2. In terms of biological role, the glycine cleavage system catalyzes the degradation of glycine. The P protein binds the alpha-amino group of glycine through its pyridoxal phosphate cofactor; CO(2) is released and the remaining methylamine moiety is then transferred to the lipoamide cofactor of the H protein. The polypeptide is Probable glycine dehydrogenase (decarboxylating) subunit 1 (Rhodospirillum rubrum (strain ATCC 11170 / ATH 1.1.1 / DSM 467 / LMG 4362 / NCIMB 8255 / S1)).